Consider the following 324-residue polypeptide: uncharacterized protein (324 aa).

8 helical membrane-spanning segments follow: residues 5–24 (VIGI…NRAM), 39–61 (FIFM…PLLL), 68–90 (FYWI…FAAA), 95–117 (WLIA…LFYV), 130–152 (QKIP…LIQL), 162–179 (MLLF…AYPL), 199–218 (LGMT…YGWW), and 228–250 (TVQS…FWAT).

The protein resides in the cell membrane. This is an uncharacterized protein from Bacillus subtilis (strain 168).